Consider the following 540-residue polypeptide: Alanine aminotransferase 2, mitochondrial (540 aa).

The transit peptide at 1–46 (MRRFLINQAKGLVDHSRRQHHHKSPSFLSPQPRPLASSPPALSRFF) directs the protein to the mitochondrion. Residues 11-40 (GLVDHSRRQHHHKSPSFLSPQPRPLASSPP) are disordered. The span at 28 to 40 (LSPQPRPLASSPP) shows a compositional bias: low complexity. Lys-357 carries the N6-(pyridoxal phosphate)lysine modification.

Belongs to the class-I pyridoxal-phosphate-dependent aminotransferase family. Alanine aminotransferase subfamily. Homodimer. Requires pyridoxal 5'-phosphate as cofactor. In terms of processing, the N-terminus is blocked. Expressed in shoots, essentially in leaves and flowers, mostly in vascular tissues. Also detected in stems and roots.

The protein resides in the mitochondrion. It carries out the reaction L-alanine + 2-oxoglutarate = pyruvate + L-glutamate. The protein operates within photosynthesis; C4 acid pathway. It participates in amino-acid degradation; L-alanine degradation via transaminase pathway; pyruvate from L-alanine: step 1/1. The chain is Alanine aminotransferase 2, mitochondrial (ALAAT2) from Arabidopsis thaliana (Mouse-ear cress).